We begin with the raw amino-acid sequence, 32 residues long: MSDIN-like toxin proprotein 3 (32 aa).

A propeptide spanning residues 1 to 10 is cleaved from the precursor; it reads MSDINATRLP. The cyclopeptide (Val-Pro) cross-link spans 11–17; sequence VWIGYSP. Residues 18 to 32 constitute a propeptide that is removed on maturation; that stretch reads CVGDDAVALLNRGEG.

This sequence belongs to the MSDIN fungal toxin family. Post-translationally, processed by the macrocyclase-peptidase enzyme POPB to yield a toxic cyclic heptapeptide. POPB first removes 10 residues from the N-terminus. Conformational trapping of the remaining peptide forces the enzyme to release this intermediate rather than proceed to macrocyclization. The enzyme rebinds the remaining peptide in a different conformation and catalyzes macrocyclization of the N-terminal 7 residues.

In terms of biological role, probable toxin that belongs to the MSDIN-like toxin family responsible for a large number of food poisoning cases and deaths. This chain is MSDIN-like toxin proprotein 3, found in Amanita fuligineoides.